The primary structure comprises 152 residues: Transcriptional regulator MraZ (152 aa).

2 consecutive SpoVT-AbrB domains span residues alanine 5–glutamate 52 and alanine 81–alanine 124.

This sequence belongs to the MraZ family. In terms of assembly, forms oligomers.

It is found in the cytoplasm. The protein localises to the nucleoid. Negatively regulates its own expression and that of the subsequent genes in the proximal part of the division and cell wall (dcw) gene cluster. Acts by binding directly to DNA. May also regulate the expression of genes outside the dcw cluster. The sequence is that of Transcriptional regulator MraZ from Photorhabdus laumondii subsp. laumondii (strain DSM 15139 / CIP 105565 / TT01) (Photorhabdus luminescens subsp. laumondii).